A 672-amino-acid chain; its full sequence is DNA ligase (672 aa).

Residues 34–38 (DSVYD), 83–84 (SL), and glutamate 113 contribute to the NAD(+) site. The active-site N6-AMP-lysine intermediate is lysine 115. Residues arginine 136, glutamate 170, lysine 286, and lysine 310 each coordinate NAD(+). Zn(2+) is bound by residues cysteine 404, cysteine 407, cysteine 422, and cysteine 427. A BRCT domain is found at 592 to 672 (STDSSFNGLR…EFIQQMEEES (81 aa)).

It belongs to the NAD-dependent DNA ligase family. LigA subfamily. Mg(2+) is required as a cofactor. The cofactor is Mn(2+).

It catalyses the reaction NAD(+) + (deoxyribonucleotide)n-3'-hydroxyl + 5'-phospho-(deoxyribonucleotide)m = (deoxyribonucleotide)n+m + AMP + beta-nicotinamide D-nucleotide.. In terms of biological role, DNA ligase that catalyzes the formation of phosphodiester linkages between 5'-phosphoryl and 3'-hydroxyl groups in double-stranded DNA using NAD as a coenzyme and as the energy source for the reaction. It is essential for DNA replication and repair of damaged DNA. This Ligilactobacillus salivarius (strain UCC118) (Lactobacillus salivarius) protein is DNA ligase.